We begin with the raw amino-acid sequence, 225 residues long: Venom allergen 5 (225 aa).

Positions 1-23 are cleaved as a signal peptide; it reads MKISGFVYLILITTIINLSFSEA. 4 disulfides stabilise this stretch: C27-C39, C31-C124, C49-C117, and C191-C208. The SCP domain maps to 69–210; it reads KQHNEFRQKV…WHRHYLVCNY (142 aa).

It belongs to the CRISP family. Venom allergen 5-like subfamily. In terms of tissue distribution, expressed by the venom gland.

It localises to the secreted. The protein is Venom allergen 5 of Vespa magnifica (Hornet).